The chain runs to 296 residues: Triplex capsid protein 2 (296 aa).

The protein belongs to the herpesviridae TRX2 protein family. In terms of assembly, interacts with TRX1 and major capisd protein/MCP.

Its subcellular location is the virion. The protein localises to the host nucleus. In terms of biological role, structural component of the T=16 icosahedral capsid. The capsid is composed of pentamers and hexamers of major capsid protein/MCP, which are linked together by heterotrimers called triplexes. These triplexes are formed by a single molecule of triplex protein 1/TRX1 and two copies of triplex protein 2/TRX2. Additionally, TRX1 is required for efficient transport of TRX2 to the nucleus, which is the site of capsid assembly. This chain is Triplex capsid protein 2, found in Homo sapiens (Human).